We begin with the raw amino-acid sequence, 99 residues long: Large ribosomal subunit protein uL23 (99 aa).

It belongs to the universal ribosomal protein uL23 family. In terms of assembly, part of the 50S ribosomal subunit. Contacts protein L29, and trigger factor when it is bound to the ribosome.

In terms of biological role, one of the early assembly proteins it binds 23S rRNA. One of the proteins that surrounds the polypeptide exit tunnel on the outside of the ribosome. Forms the main docking site for trigger factor binding to the ribosome. This is Large ribosomal subunit protein uL23 from Saccharopolyspora erythraea (strain ATCC 11635 / DSM 40517 / JCM 4748 / NBRC 13426 / NCIMB 8594 / NRRL 2338).